The following is a 155-amino-acid chain: Riboflavin kinase (155 aa).

4 residues coordinate ATP: glycine 15, lysine 21, threonine 27, and asparagine 29. The Mg(2+) site is built by threonine 27 and asparagine 29. Catalysis depends on glutamate 79, which acts as the Nucleophile. ATP contacts are provided by isoleucine 82, histidine 84, and tyrosine 91. Arginine 104, lysine 107, and phenylalanine 109 together coordinate FMN.

In terms of assembly, monomer. Directly interacts with TNFRSF1A death domain; this interaction may be supported by TRADD. In the absence of TNFRSF1A, interacts with TRADD. Independently of TNFRSF1A, interacts with the NADPH oxidase subunit CYBA. It depends on Zn(2+) as a cofactor. Mg(2+) serves as cofactor.

It localises to the cytoplasm. It catalyses the reaction riboflavin + ATP = FMN + ADP + H(+). The protein operates within cofactor biosynthesis; FMN biosynthesis; FMN from riboflavin (ATP route): step 1/1. Its function is as follows. Catalyzes the phosphorylation of riboflavin (vitamin B2) to form flavin-mononucleotide (FMN), hence rate-limiting enzyme in the synthesis of FAD. Essential for TNF-induced reactive oxygen species (ROS) production. Through its interaction with both TNFRSF1A and CYBA, physically and functionally couples TNFRSF1A to NADPH oxidase. TNF-activation of RFK may enhance the incorporation of FAD in NADPH oxidase, a critical step for the assembly and activation of NADPH oxidase. In Mus musculus (Mouse), this protein is Riboflavin kinase (Rfk).